The sequence spans 431 residues: Isocitrate lyase (431 aa).

The tract at residues 1–21 is disordered; that stretch reads MSNVGTPRTAQEIQQDWDTNP. Residue 93 to 95 coordinates substrate; sequence SGW. Position 155 (aspartate 155) interacts with Mg(2+). Residue cysteine 193 is the Proton acceptor of the active site. Substrate is bound by residues 194 to 195, arginine 230, 315 to 319, and threonine 349; these read GH and NCSPS.

It belongs to the isocitrate lyase/PEP mutase superfamily. Isocitrate lyase family. Homotetramer. It depends on Mg(2+) as a cofactor.

It carries out the reaction D-threo-isocitrate = glyoxylate + succinate. Its pathway is carbohydrate metabolism; glyoxylate cycle; (S)-malate from isocitrate: step 1/2. Functionally, involved in the metabolic adaptation in response to environmental changes. Catalyzes the reversible formation of succinate and glyoxylate from isocitrate, a key step of the glyoxylate cycle, which operates as an anaplerotic route for replenishing the tricarboxylic acid cycle during growth on fatty acid substrates. In Corynebacterium efficiens (strain DSM 44549 / YS-314 / AJ 12310 / JCM 11189 / NBRC 100395), this protein is Isocitrate lyase (aceA).